We begin with the raw amino-acid sequence, 937 residues long: Isoleucine--tRNA ligase (937 aa).

Positions 58-68 (PYANGTLHLGH) match the 'HIGH' region motif. Glu561 contributes to the L-isoleucyl-5'-AMP binding site. Residues 602 to 606 (KMSKS) carry the 'KMSKS' region motif. Lys605 contacts ATP. Zn(2+) contacts are provided by Cys900, Cys903, Cys920, and Cys923.

It belongs to the class-I aminoacyl-tRNA synthetase family. IleS type 1 subfamily. Monomer. The cofactor is Zn(2+).

The protein localises to the cytoplasm. It catalyses the reaction tRNA(Ile) + L-isoleucine + ATP = L-isoleucyl-tRNA(Ile) + AMP + diphosphate. Its function is as follows. Catalyzes the attachment of isoleucine to tRNA(Ile). As IleRS can inadvertently accommodate and process structurally similar amino acids such as valine, to avoid such errors it has two additional distinct tRNA(Ile)-dependent editing activities. One activity is designated as 'pretransfer' editing and involves the hydrolysis of activated Val-AMP. The other activity is designated 'posttransfer' editing and involves deacylation of mischarged Val-tRNA(Ile). This is Isoleucine--tRNA ligase from Histophilus somni (strain 2336) (Haemophilus somnus).